Consider the following 264-residue polypeptide: Cell division protein DivIB (264 aa).

Residues 1 to 23 (MAVYEERIPQVKQQRPRRRGNRK) lie on the Cytoplasmic side of the membrane. Residues 24–44 (LVFLLVLFFLTILIIVFIRSP) traverse the membrane as a helical segment. Residues 45 to 264 (YSKVQEIRVT…GQEQPQQPQQ (220 aa)) are Extracellular-facing. One can recognise a POTRA domain in the interval 46 to 114 (SKVQEIRVTG…GLITLHITEQ (69 aa)).

It belongs to the FtsQ/DivIB family. DivIB subfamily.

It is found in the cell membrane. In terms of biological role, cell division protein that may be involved in stabilizing or promoting the assembly of the division complex. The polypeptide is Cell division protein DivIB (Brevibacillus brevis (strain 47 / JCM 6285 / NBRC 100599)).